The chain runs to 507 residues: Monoogygenase CPUR_05431 (507 aa).

Belongs to the PheA/TfdB FAD monooxygenase family. Requires FAD as cofactor.

It functions in the pathway pigment biosynthesis. Its function is as follows. Monoogygenase; part of the ergochrome gene cluster responsible for the typical purple-black color of the ergot sclerotia. The ergochrome gene cluster produces several ergot pigments including the yellow ergochrome secalonic acid and its derivatives, as well as the red anthraquinones endocrocin and clavorubin. The pathway begins with the synthesis of atrochrysone thioester by the polyketide synthase (PKS) CPUR_05437. The atrochrysone carboxyl ACP thioesterase CPUR_05436 then breaks the thioester bond and releases the atrochrysone carboxylic acid from CPUR_05437. The atrochrysone carboxylic acid is then converted to atrochrysone which is further transformed into emodin anthrone. The next step is performed by the anthrone oxygenase CPUR_05434 that catalyzes the oxidation of emodinanthrone to emodin. Emodin is further modified to yield monodictyphenone via several steps involving CPUR_05427, CPUR_05428, CPUR_05429 and CPUR_05430. The short chain dehydrogenase/reductase CPUR_05418 then catalyzes the C-5 ketoreduction to give the xanthone skeleton of the monomeric units. Ergochromes formation requires further dimerization steps of different xanthone units, probably catalyzed by the cytochrome P450 monooxygenase CPUR_05419. CPUR_05425, CPUR_05426 and CPUR_05431 are unique to Claviceps, thus it is likely that they are involved in further modification of xanthone units or in their dimerization. The yellow ergochromes and the red anthraquinone pigments endocrocin and clavorubin are products from the same PKS derived precursors and the latter are likely shunt products in the pathway of xanthone biosynthesis. It is proposed that atrochrysone carboxylic acid released from the PKS CPUR_05437 can also be converted to endocrocin anthrone which is further oxidized into endocrocin by CPUR_05435. Endocrocin could be then modified to clavorubin, possibly by CPUR_05423 and CPUR_05431. Clavorubin is the principal anthraquinone metabolite produced by the cluster with a much higher yield compared to endocrocin. The chain is Monoogygenase CPUR_05431 from Claviceps purpurea (strain 20.1) (Ergot fungus).